Reading from the N-terminus, the 327-residue chain is UDP-N-acetylenolpyruvoylglucosamine reductase (327 aa).

In terms of domain architecture, FAD-binding PCMH-type spans 42-223 (RTGGLAELFY…RAAMDEVALH (182 aa)). Arg188 is a catalytic residue. Ser237 functions as the Proton donor in the catalytic mechanism. Glu307 is a catalytic residue.

Belongs to the MurB family. FAD is required as a cofactor.

It localises to the cytoplasm. The enzyme catalyses UDP-N-acetyl-alpha-D-muramate + NADP(+) = UDP-N-acetyl-3-O-(1-carboxyvinyl)-alpha-D-glucosamine + NADPH + H(+). It functions in the pathway cell wall biogenesis; peptidoglycan biosynthesis. In terms of biological role, cell wall formation. The chain is UDP-N-acetylenolpyruvoylglucosamine reductase from Bartonella tribocorum (strain CIP 105476 / IBS 506).